Consider the following 105-residue polypeptide: UPF0145 protein CPS_2458 (105 aa).

This sequence belongs to the UPF0145 family.

This is UPF0145 protein CPS_2458 from Colwellia psychrerythraea (strain 34H / ATCC BAA-681) (Vibrio psychroerythus).